Consider the following 93-residue polypeptide: Small ribosomal subunit protein uS19 (93 aa).

The disordered stretch occupies residues 74–93 (FSPTRTFRGHVKDDRKSKRR). The segment covering 83 to 93 (HVKDDRKSKRR) has biased composition (basic and acidic residues).

Belongs to the universal ribosomal protein uS19 family.

Protein S19 forms a complex with S13 that binds strongly to the 16S ribosomal RNA. The sequence is that of Small ribosomal subunit protein uS19 from Streptomyces griseus subsp. griseus (strain JCM 4626 / CBS 651.72 / NBRC 13350 / KCC S-0626 / ISP 5235).